The primary structure comprises 297 residues: Lipoyl synthase (297 aa).

[4Fe-4S] cluster-binding residues include Cys-37, Cys-42, Cys-48, Cys-63, Cys-67, Cys-70, and Ser-276. A Radical SAM core domain is found at 49 to 265 (WSRKHATVMI…ERIAKTKGFL (217 aa)).

Belongs to the radical SAM superfamily. Lipoyl synthase family. It depends on [4Fe-4S] cluster as a cofactor.

The protein localises to the cytoplasm. The enzyme catalyses [[Fe-S] cluster scaffold protein carrying a second [4Fe-4S](2+) cluster] + N(6)-octanoyl-L-lysyl-[protein] + 2 oxidized [2Fe-2S]-[ferredoxin] + 2 S-adenosyl-L-methionine + 4 H(+) = [[Fe-S] cluster scaffold protein] + N(6)-[(R)-dihydrolipoyl]-L-lysyl-[protein] + 4 Fe(3+) + 2 hydrogen sulfide + 2 5'-deoxyadenosine + 2 L-methionine + 2 reduced [2Fe-2S]-[ferredoxin]. It functions in the pathway protein modification; protein lipoylation via endogenous pathway; protein N(6)-(lipoyl)lysine from octanoyl-[acyl-carrier-protein]: step 2/2. Functionally, catalyzes the radical-mediated insertion of two sulfur atoms into the C-6 and C-8 positions of the octanoyl moiety bound to the lipoyl domains of lipoate-dependent enzymes, thereby converting the octanoylated domains into lipoylated derivatives. This chain is Lipoyl synthase, found in Rickettsia prowazekii (strain Madrid E).